We begin with the raw amino-acid sequence, 599 residues long: MSKSLSWDTLDYTLQPWIRTAVDAMGYETMTPVQASTIPLFARNKDVVVESVTGSGKTVAFVIPVLERVIQDDANSSKLKKGHFHTIIISPTRELASQIQGVIEAFLTYYPDGEYPIKSQLLIGSNTSSVRDDVAAFLEHRPQILVGTPGRLLDFLKMPNIKTSSCGAAILDEADKLLDMNFEKDVETILKMLPKQRRTGLFSATVSSAGTQVFKTGMRNPVKVSVKTSNKAPSSLDINYIVIEPRMKLQLLLTLLNNYRYKKCIVYLPTCIAVTYFYSILQHLAKLNKMDENLKLYSLHGKLLTNSRMKTLDRFTQELGKAVLLTTDVAARGIDIPDIDLVLQMDPPIDADIFLHRCGRAGRANRAGRAIVFLNQGREEDYIPFLQVKNVEAKELDTVAIKPIEGLPEIIRAWILEDRARFDHSLKVYVAFLRYYSKHTASSIFRLQTLDYIGIAEMHGLIRLPGTPEIQRYLSKDAIPEDGWLVSPPIDLDSFAYADPQREKARKLAKKEAKDVKDNNKLKSEMRKNNEAWSKKTVTKENKLQRKEKMALKRKAIEEKLIENSDDSDNEVETDWKDIVRQRKKKKTNSGMQGDFGDL.

Positions 7–35 match the Q motif motif; it reads WDTLDYTLQPWIRTAVDAMGYETMTPVQA. Residues 38-224 enclose the Helicase ATP-binding domain; sequence IPLFARNKDV…KTGMRNPVKV (187 aa). 51-58 provides a ligand contact to ATP; the sequence is SVTGSGKT. A DEAD box motif is present at residues 172 to 175; the sequence is DEAD. Residues 248–415 enclose the Helicase C-terminal domain; that stretch reads KLQLLLTLLN…GLPEIIRAWI (168 aa). Residues 501 to 561 adopt a coiled-coil conformation; that stretch reads QREKARKLAK…LKRKAIEEKL (61 aa). The disordered stretch occupies residues 559–599; it reads EKLIENSDDSDNEVETDWKDIVRQRKKKKTNSGMQGDFGDL. Positions 564–573 are enriched in acidic residues; it reads NSDDSDNEVE.

Belongs to the DEAD box helicase family. DDX55/SPB4 subfamily. Component of pre-60S ribosomal complexes.

It localises to the nucleus. The protein localises to the nucleolus. The catalysed reaction is ATP + H2O = ADP + phosphate + H(+). In terms of biological role, ATP-binding RNA helicase involved in the biogenesis of 60S ribosomal subunits. Binds 90S pre-ribosomal particles and dissociates from pre-60S ribosomal particles after processing of 27SB pre-rRNA. Required for the normal formation of 18S rRNA through the processing of pre-rRNAs at sites A0, A1 and A2, and the normal formation of 25S and 5.8S rRNAs through the processing of pre-rRNAs at sites C1 and C2. The protein is ATP-dependent rRNA helicase SPB4 of Eremothecium gossypii (strain ATCC 10895 / CBS 109.51 / FGSC 9923 / NRRL Y-1056) (Yeast).